A 314-amino-acid polypeptide reads, in one-letter code: Ferredoxin:CoB-CoM heterodisulfide reductase subunit B (314 aa).

Belongs to the HdrB family. In terms of assembly, the ferredoxin:CoB-CoM heterodisulfide reductase is composed of three subunits; HdrA1, HdrB1 and HdrC1. It depends on [4Fe-4S] cluster as a cofactor.

Its subcellular location is the cytoplasm. The catalysed reaction is coenzyme B + coenzyme M + 2 oxidized [2Fe-2S]-[ferredoxin] = coenzyme M-coenzyme B heterodisulfide + 2 reduced [2Fe-2S]-[ferredoxin] + 2 H(+). Its pathway is cofactor metabolism; coenzyme M-coenzyme B heterodisulfide reduction; coenzyme B and coenzyme M from coenzyme M-coenzyme B heterodisulfide: step 1/1. In terms of biological role, part of a complex that catalyzes the reversible reduction of CoM-S-S-CoB to the thiol-coenzymes H-S-CoM (coenzyme M) and H-S-CoB (coenzyme B). Probably involved in methylotrophic methanogenesis but not in aceticlastic methanogenesis. This chain is Ferredoxin:CoB-CoM heterodisulfide reductase subunit B, found in Methanosarcina acetivorans (strain ATCC 35395 / DSM 2834 / JCM 12185 / C2A).